The sequence spans 619 residues: 1-deoxy-D-xylulose-5-phosphate synthase (619 aa).

Thiamine diphosphate-binding positions include H74 and 115–117; that span reads GHS. D146 lines the Mg(2+) pocket. Thiamine diphosphate-binding positions include 147 to 148, N175, and Y285; that span reads GA. N175 provides a ligand contact to Mg(2+). A disordered region spans residues 289–310; that stretch reads EKSPSKYHGIPPSNDKKEEPNK. Residue E365 coordinates thiamine diphosphate.

It belongs to the transketolase family. DXPS subfamily. As to quaternary structure, homodimer. Requires Mg(2+) as cofactor. Thiamine diphosphate serves as cofactor.

The enzyme catalyses D-glyceraldehyde 3-phosphate + pyruvate + H(+) = 1-deoxy-D-xylulose 5-phosphate + CO2. Its pathway is metabolic intermediate biosynthesis; 1-deoxy-D-xylulose 5-phosphate biosynthesis; 1-deoxy-D-xylulose 5-phosphate from D-glyceraldehyde 3-phosphate and pyruvate: step 1/1. Functionally, catalyzes the acyloin condensation reaction between C atoms 2 and 3 of pyruvate and glyceraldehyde 3-phosphate to yield 1-deoxy-D-xylulose-5-phosphate (DXP). This Clostridium botulinum (strain Alaska E43 / Type E3) protein is 1-deoxy-D-xylulose-5-phosphate synthase.